The primary structure comprises 154 residues: Protein E6 (154 aa).

Zinc fingers lie at residues 34–70 (CVFC…CKFC) and 107–143 (CYRC…CLTC).

It belongs to the papillomaviridae E6 protein family. In terms of assembly, forms homodimers. Interacts with ubiquitin-protein ligase UBE3A/E6-AP; this interaction stimulates UBE3A ubiquitin activity. Interacts with host TP53 and EP300; this interaction inhibits TP53 activity.

The protein localises to the host cytoplasm. The protein resides in the host nucleus. Plays a major role in the induction and maintenance of cellular transformation. E6 associates with host UBE3A/E6-AP ubiquitin-protein ligase and modulates its activity. Sequesters tumor suppressor TP53 in the host cytoplasm and modulates its activity by interacting with host EP300 that results in the reduction of TP53 acetylation and activation. In turn, apoptosis induced by DNA damage is inhibited. E6 also protects host keratinocytes from apoptosis by mediating the degradation of host BAK1. May also inhibit host immune response. This chain is Protein E6, found in Human papillomavirus type 53.